A 203-amino-acid chain; its full sequence is Ribosome maturation factor RimP (203 aa).

The disordered stretch occupies residues 183–203 (FDDIETEGSAEGTTGSEEENK).

The protein belongs to the RimP family.

It localises to the cytoplasm. Required for maturation of 30S ribosomal subunits. This chain is Ribosome maturation factor RimP, found in Ruegeria sp. (strain TM1040) (Silicibacter sp.).